We begin with the raw amino-acid sequence, 315 residues long: L-lactate dehydrogenase (315 aa).

Residues Val-14, Asp-35, and Tyr-66 each contribute to the NAD(+) site. Substrate is bound by residues Gln-83, Arg-89, and 121–124 (NPVD). NAD(+)-binding positions include 119-121 (VAN) and Ser-144. 149–152 (DTAR) is a substrate binding site. His-176 serves as the catalytic Proton acceptor. A Phosphotyrosine modification is found at Tyr-221. Thr-230 contacts substrate.

Belongs to the LDH/MDH superfamily. LDH family. In terms of assembly, homotetramer.

The protein localises to the cytoplasm. The catalysed reaction is (S)-lactate + NAD(+) = pyruvate + NADH + H(+). Its pathway is fermentation; pyruvate fermentation to lactate; (S)-lactate from pyruvate: step 1/1. Functionally, catalyzes the conversion of lactate to pyruvate. In Mesomycoplasma hyopneumoniae (strain 232) (Mycoplasma hyopneumoniae), this protein is L-lactate dehydrogenase.